A 494-amino-acid polypeptide reads, in one-letter code: Tripartite motif-containing protein 5 (494 aa).

Position 2 is an N-acetylalanine (Ala-2). The RING-type zinc finger occupies 15–59 (CPICLELLTEPLSLDCGHSFCQACITANHKESMLHQGERSCPLCR). The B box-type zinc finger occupies 91-132 (QNVDHCARHGEKLLLFCEQDGNIICWLCERSQEHRGHNTFLV). 4 residues coordinate Zn(2+): Cys-96, His-99, Cys-118, and His-124. Residues 132–223 (VEEVAQKYRE…RLVQSENDMV (92 aa)) are a coiled coil. A required for interaction with GABARAP and for autophagy region spans residues 186-199 (FKQLRDILDCEESN). The 215-residue stretch at 280–494 (PDLKRMLQVL…LPMTLCSPRS (215 aa)) folds into the B30.2/SPRY domain.

The protein belongs to the TRIM/RBCC family. Can form homodimers and homotrimers. In addition to lower-order dimerization, also exhibits a higher-order multimerization and both low- and high-order multimerizations are essential for its restriction activity. Interacts with BTBD1 and BTBD2. Interacts with PSMC4, PSMC5, PSMD7 and HSPA8/HSC70. Interacts (via B30.2/SPRY domain) with HSPA1A/B. Interacts with PSMC2, MAP3K7/TAK1, TAB2 and TAB3. Interacts with SQSTM1. Interacts with TRIM6 and TRIM34. Interacts with ULK1 (phosphorylated form), GABARAP, GABARAPL1, GABARAPL2, MAP1LC3A, MAP1LC3C and BECN1. Post-translationally, degraded in a proteasome-independent fashion in the absence of viral infection but in a proteasome-dependent fashion following exposure to restriction sensitive virus. Autoubiquitinated in a RING finger- and UBE2D2-dependent manner. Monoubiquitinated by TRIM21. Deubiquitinated by Yersinia YopJ. Ubiquitination may not lead to proteasomal degradation.

The protein resides in the cytoplasm. It is found in the nucleus. It carries out the reaction S-ubiquitinyl-[E2 ubiquitin-conjugating enzyme]-L-cysteine + [acceptor protein]-L-lysine = [E2 ubiquitin-conjugating enzyme]-L-cysteine + N(6)-ubiquitinyl-[acceptor protein]-L-lysine.. Its pathway is protein modification; protein ubiquitination. Its function is as follows. Capsid-specific restriction factor that prevents infection from non-host-adapted retroviruses. Blocks viral replication early in the life cycle, after viral entry but before reverse transcription. In addition to acting as a capsid-specific restriction factor, also acts as a pattern recognition receptor that activates innate immune signaling in response to the retroviral capsid lattice. Binding to the viral capsid triggers its E3 ubiquitin ligase activity, and in concert with the heterodimeric ubiquitin conjugating enzyme complex UBE2V1-UBE2N (also known as UBC13-UEV1A complex) generates 'Lys-63'-linked polyubiquitin chains, which in turn are catalysts in the autophosphorylation of the MAP3K7/TAK1 complex (includes TAK1, TAB2, and TAB3). Activation of the MAP3K7/TAK1 complex by autophosphorylation results in the induction and expression of NF-kappa-B and MAPK-responsive inflammatory genes, thereby leading to an innate immune response in the infected cell. Restricts infection by simian immunodeficiency virus (SIV-mac). Plays a role in regulating autophagy through activation of autophagy regulator BECN1 by causing its dissociation from its inhibitors BCL2 and TAB2. In Saimiri sciureus (Common squirrel monkey), this protein is Tripartite motif-containing protein 5 (TRIM5).